The sequence spans 408 residues: Acetate kinase (408 aa).

A Mg(2+)-binding site is contributed by asparagine 7. Position 14 (lysine 14) interacts with ATP. Arginine 91 serves as a coordination point for substrate. Catalysis depends on aspartate 148, which acts as the Proton donor/acceptor. ATP contacts are provided by residues 208–212, 283–285, and 331–335; these read HLGNG, DFR, and GIGEN. Residue glutamate 384 participates in Mg(2+) binding.

It belongs to the acetokinase family. In terms of assembly, homodimer. Mg(2+) serves as cofactor. Mn(2+) is required as a cofactor.

The protein localises to the cytoplasm. It catalyses the reaction acetate + ATP = acetyl phosphate + ADP. It participates in metabolic intermediate biosynthesis; acetyl-CoA biosynthesis; acetyl-CoA from acetate: step 1/2. Inhibited by diethylpyrocarbonate, hydroxylamine and phenylglyoxal. Its function is as follows. Catalyzes the formation of acetyl phosphate from acetate and ATP. Can also catalyze the reverse reaction. Can also phosphorylate propionate, but has very low activity toward butyrate. This is Acetate kinase from Methanosarcina thermophila.